The following is a 271-amino-acid chain: Putative pirin-like protein At3g59260 (271 aa).

It belongs to the pirin family.

The protein localises to the nucleus. This is Putative pirin-like protein At3g59260 from Arabidopsis thaliana (Mouse-ear cress).